The sequence spans 138 residues: Urease subunit beta (138 aa).

The tract at residues 115 to 138 is disordered; it reads RMRAAGFGDTGEAAPDDGDTESDQ. Residues 128–138 are compositionally biased toward acidic residues; the sequence is APDDGDTESDQ.

It belongs to the urease beta subunit family. Heterotrimer of UreA (gamma), UreB (beta) and UreC (alpha) subunits. Three heterotrimers associate to form the active enzyme.

Its subcellular location is the cytoplasm. It carries out the reaction urea + 2 H2O + H(+) = hydrogencarbonate + 2 NH4(+). The protein operates within nitrogen metabolism; urea degradation; CO(2) and NH(3) from urea (urease route): step 1/1. This is Urease subunit beta from Haloarcula marismortui (strain ATCC 43049 / DSM 3752 / JCM 8966 / VKM B-1809) (Halobacterium marismortui).